Here is a 242-residue protein sequence, read N- to C-terminus: Protein crossbronx (242 aa).

The region spanning 20–176 is the UBC core domain; that stretch reads QQEYKILAEY…VQENIKESKA (157 aa).

Belongs to the ubiquitin-conjugating enzyme family. FTS subfamily.

This is Protein crossbronx (cbx) from Drosophila ananassae (Fruit fly).